Here is a 133-residue protein sequence, read N- to C-terminus: Large ribosomal subunit protein bL12 (133 aa).

The protein belongs to the bacterial ribosomal protein bL12 family. Homodimer. Part of the ribosomal stalk of the 50S ribosomal subunit. Forms a multimeric L10(L12)X complex, where L10 forms an elongated spine to which 2 to 4 L12 dimers bind in a sequential fashion. Binds GTP-bound translation factors.

In terms of biological role, forms part of the ribosomal stalk which helps the ribosome interact with GTP-bound translation factors. Is thus essential for accurate translation. This chain is Large ribosomal subunit protein bL12, found in Ehrlichia chaffeensis (strain ATCC CRL-10679 / Arkansas).